A 273-amino-acid chain; its full sequence is Putative phosphoenolpyruvate synthase regulatory protein (273 aa).

153 to 160 (GVSRSGKT) serves as a coordination point for ADP.

Belongs to the pyruvate, phosphate/water dikinase regulatory protein family. PSRP subfamily.

It catalyses the reaction [pyruvate, water dikinase] + ADP = [pyruvate, water dikinase]-phosphate + AMP + H(+). The catalysed reaction is [pyruvate, water dikinase]-phosphate + phosphate + H(+) = [pyruvate, water dikinase] + diphosphate. In terms of biological role, bifunctional serine/threonine kinase and phosphorylase involved in the regulation of the phosphoenolpyruvate synthase (PEPS) by catalyzing its phosphorylation/dephosphorylation. In Leptothrix cholodnii (strain ATCC 51168 / LMG 8142 / SP-6) (Leptothrix discophora (strain SP-6)), this protein is Putative phosphoenolpyruvate synthase regulatory protein.